A 253-amino-acid polypeptide reads, in one-letter code: Triosephosphate isomerase (253 aa).

Residue 9–11 (NWK) coordinates substrate. The Electrophile role is filled by H97. The Proton acceptor role is filled by E169. Substrate contacts are provided by residues G175, S215, and 236-237 (GG).

This sequence belongs to the triosephosphate isomerase family. As to quaternary structure, homodimer.

It is found in the cytoplasm. It carries out the reaction D-glyceraldehyde 3-phosphate = dihydroxyacetone phosphate. It participates in carbohydrate biosynthesis; gluconeogenesis. The protein operates within carbohydrate degradation; glycolysis; D-glyceraldehyde 3-phosphate from glycerone phosphate: step 1/1. Involved in the gluconeogenesis. Catalyzes stereospecifically the conversion of dihydroxyacetone phosphate (DHAP) to D-glyceraldehyde-3-phosphate (G3P). This is Triosephosphate isomerase from Staphylococcus epidermidis (strain ATCC 35984 / DSM 28319 / BCRC 17069 / CCUG 31568 / BM 3577 / RP62A).